Consider the following 252-residue polypeptide: Hydroxyacylglutathione hydrolase (252 aa).

Residues histidine 54, histidine 56, aspartate 58, histidine 59, histidine 111, aspartate 128, and histidine 166 each contribute to the Zn(2+) site.

It belongs to the metallo-beta-lactamase superfamily. Glyoxalase II family. As to quaternary structure, monomer. The cofactor is Zn(2+).

It carries out the reaction an S-(2-hydroxyacyl)glutathione + H2O = a 2-hydroxy carboxylate + glutathione + H(+). The protein operates within secondary metabolite metabolism; methylglyoxal degradation; (R)-lactate from methylglyoxal: step 2/2. Its function is as follows. Thiolesterase that catalyzes the hydrolysis of S-D-lactoyl-glutathione to form glutathione and D-lactic acid. The protein is Hydroxyacylglutathione hydrolase of Vibrio campbellii (strain ATCC BAA-1116).